A 243-amino-acid chain; its full sequence is Segregation and condensation protein A (243 aa).

The protein belongs to the ScpA family. Component of a cohesin-like complex composed of ScpA, ScpB and the Smc homodimer, in which ScpA and ScpB bind to the head domain of Smc. The presence of the three proteins is required for the association of the complex with DNA.

It is found in the cytoplasm. In terms of biological role, participates in chromosomal partition during cell division. May act via the formation of a condensin-like complex containing Smc and ScpB that pull DNA away from mid-cell into both cell halves. The chain is Segregation and condensation protein A from Thermoanaerobacter pseudethanolicus (strain ATCC 33223 / 39E) (Clostridium thermohydrosulfuricum).